Reading from the N-terminus, the 35-residue chain is MSDIN-like toxin proprotein 6 (35 aa).

Positions 1–10 are excised as a propeptide; it reads MSDINTTRLP. Positions 11-18 form a cross-link, cyclopeptide (Phe-Pro); it reads FVFVASPP. A propeptide spanning residues 19–35 is cleaved from the precursor; that stretch reads CVGDDIAMVLTRGENLC.

Belongs to the MSDIN fungal toxin family. Processed by the macrocyclase-peptidase enzyme POPB to yield a toxic cyclic octapeptide. POPB first removes 10 residues from the N-terminus. Conformational trapping of the remaining peptide forces the enzyme to release this intermediate rather than proceed to macrocyclization. The enzyme rebinds the remaining peptide in a different conformation and catalyzes macrocyclization of the N-terminal 8 residues. In terms of tissue distribution, expressed in basidiocarps.

In terms of biological role, probable toxin that belongs to the MSDIN-like toxin family responsible for a large number of food poisoning cases and deaths. This is MSDIN-like toxin proprotein 6 from Amanita exitialis (Guangzhou destroying angel).